The chain runs to 168 residues: Peptide deformylase 1 (168 aa).

2 residues coordinate Fe cation: Cys-92 and His-134. The active site involves Glu-135. A Fe cation-binding site is contributed by His-138.

This sequence belongs to the polypeptide deformylase family. Fe(2+) serves as cofactor.

The enzyme catalyses N-terminal N-formyl-L-methionyl-[peptide] + H2O = N-terminal L-methionyl-[peptide] + formate. In terms of biological role, removes the formyl group from the N-terminal Met of newly synthesized proteins. Requires at least a dipeptide for an efficient rate of reaction. N-terminal L-methionine is a prerequisite for activity but the enzyme has broad specificity at other positions. This chain is Peptide deformylase 1, found in Pseudomonas syringae pv. tomato (strain ATCC BAA-871 / DC3000).